Consider the following 184-residue polypeptide: ATP synthase subunit b 1 (184 aa).

The helical transmembrane segment at 4–24 (LSILAVLAASPAMAATGPFLS) threads the bilayer.

This sequence belongs to the ATPase B chain family. In terms of assembly, F-type ATPases have 2 components, F(1) - the catalytic core - and F(0) - the membrane proton channel. F(1) has five subunits: alpha(3), beta(3), gamma(1), delta(1), epsilon(1). F(0) has three main subunits: a(1), b(2) and c(10-14). The alpha and beta chains form an alternating ring which encloses part of the gamma chain. F(1) is attached to F(0) by a central stalk formed by the gamma and epsilon chains, while a peripheral stalk is formed by the delta and b chains.

The protein localises to the cell inner membrane. F(1)F(0) ATP synthase produces ATP from ADP in the presence of a proton or sodium gradient. F-type ATPases consist of two structural domains, F(1) containing the extramembraneous catalytic core and F(0) containing the membrane proton channel, linked together by a central stalk and a peripheral stalk. During catalysis, ATP synthesis in the catalytic domain of F(1) is coupled via a rotary mechanism of the central stalk subunits to proton translocation. Functionally, component of the F(0) channel, it forms part of the peripheral stalk, linking F(1) to F(0). This Cereibacter sphaeroides (strain ATCC 17029 / ATH 2.4.9) (Rhodobacter sphaeroides) protein is ATP synthase subunit b 1.